A 1165-amino-acid chain; its full sequence is MNSCIIVLRLLLSGPFVFAPAWSYNLDVRHVQNFSFPLAGRHFGYRVLQVGNGVVVGAPSEGNSMGNLYQCQPETGDCLPVTLSSNYTSKYLGMTLATDPTSDNLLACDPGLSRTCDQNIYLSGLCYLIHENLRGPVLQGHPGYQECIKGNVDLVFLFDGSMSLQQDEFEKIVDFMKDVMKKLSNSSYQFAAVQFSTYFRTEFTFLDYIRQKDPDALLAGVKHMRLLTNTFGAINYVAKEVFRPDLGARPDATKVLIIITDGEATDEHNIDAAKDIIRYIIGIGKNFKTKESQEALHQFASKPVEEFVKILDTFEKLKDLFTELQKKIYVIEGTSKQDLTSFNMELSSSGISADLSEGHGVVGAVGAKDWAGGFLDLKADLKSSTFVGNEPLTVESRAGYLGYTVTWLPSRGTMSLLATGAPRYQHVGRVLLFQQPKRGGPWSQIQEIDGIQIGSYFGGELCGVDVDRDGETELLLIAAPLYYGEQRGGRVFIYQKIQLEFQMVSELQGETGYPLGRFGAAIAALTDINGDELTDVAVGAPLEEQGAVYIFNGQQGGLSPRPSQRIEGTQMFSGIQWFGRSIHGVKDLGGDGLADVAVGAEGQVIVLSSRPVVDIITSVSFSPAEIPVHEVECSYSTSNQKKEGVNLTVCFQVKSLISTFQGHLVANLTYTLQLDGHRTRSRGLFPGGKHKLIGNTAVTPVKSCFVFWFHFPICIQDLISPINVSLSYSLWEEEGTPRDPRALDRDIPPILKPSPHLETKEIPFEKNCGEDKNCEADLKLAFSDMRSKILRLTPSASLSVRLTLRNTAEDAYWVQVTLSFPQGLSFRKVEILKPHSHVPVGCEELPEEAVVHSRALSCNVSSPIFGEDSMVDIQVMFNTLQKGSWGDFIELQANVSCNNEDSSLLEDNSATTSIPVMYPINVLTKDQENSTLYISFTPKSPKIHHVKHIYQVRIQPSNYDNMPPLEALVRVPRVHSEGLITHKWSIQMEPPVNCSPRNLESPSDEAESCSFGTEFRCPIDFRQEILVQVNGMVELRGTIKASSMLSLCSSLAISFNSSKHFHLYGRNASMAQVVMKVDLVYEKEMLYLYVLSGIGGLLLLFLIFIALYKVGFFKRNLKEKMEANVDASSEIPGEDAGQPELEKECKDPGCLEPLQKTDEDGSGGD.

An N-terminal signal peptide occupies residues Met-1–Ser-23. Topologically, residues Tyr-24 to Glu-1084 are extracellular. 2 FG-GAP repeats span residues Arg-29–Pro-80 and Val-81–Leu-138. The N-linked (GlcNAc...) asparagine glycan is linked to Asn-33. An intrachain disulfide couples Cys-71 to Cys-78. Asn-86 is a glycosylation site (N-linked (GlcNAc...) asparagine). Cys-108 and Cys-126 form a disulfide bridge. Residues Asp-153–Leu-324 enclose the VWFA domain. Asn-185 carries N-linked (GlcNAc...) asparagine glycosylation. 5 FG-GAP repeats span residues Ser-335–Phe-386, Val-387–Trp-442, Ser-443–Met-503, Val-504–Pro-560, and Gln-564–Ala-624. Ca(2+) is bound by residues Asp-465, Asp-467, Asp-469, Glu-473, Asp-527, Asn-529, Asp-531, Asp-535, Asp-587, Asp-591, and Asp-595. Residues Asn-646, Asn-667, and Asn-723 are each glycosylated (N-linked (GlcNAc...) asparagine). The cysteines at positions 650 and 704 are disulfide-linked. Disulfide bonds link Cys-768–Cys-774 and Cys-842–Cys-858. N-linked (GlcNAc...) asparagine glycosylation is found at Asn-859, Asn-894, and Asn-929. Cystine bridges form between Cys-994-Cys-1009 and Cys-1017-Cys-1048. N-linked (GlcNAc...) asparagine glycosylation is found at Asn-1056 and Asn-1067. Residues Met-1085–Ile-1105 traverse the membrane as a helical segment. Residues Ala-1106 to Asp-1165 are Cytoplasmic-facing. A GFFKR motif motif is present at residues Gly-1111–Arg-1115. The disordered stretch occupies residues Ala-1123–Asp-1165. The span at Glu-1140 to Glu-1159 shows a compositional bias: basic and acidic residues.

Belongs to the integrin alpha chain family. As to quaternary structure, heterodimer of an alpha and a beta subunit. The ITGAL alpha subunit associates with the ITGB2 beta subunit. Interacts with THBD. Interacts with CD226. Post-translationally, in resting T-cells, up to 40% of surface ITGAL is constitutively phosphorylated. Phosphorylation causes conformational changes needed for ligand binding and is necessary for the activation by some physiological agents.

It is found in the cell membrane. In terms of biological role, integrin ITGAL/ITGB2 is a receptor for ICAM1, ICAM2, ICAM3 and ICAM4. Integrin ITGAL/ITGB2 is a receptor for F11R. Integrin ITGAL/ITGB2 is a receptor for the secreted form of ubiquitin-like protein ISG15; the interaction is mediated by ITGAL. Involved in a variety of immune phenomena including leukocyte-endothelial cell interaction, cytotoxic T-cell mediated killing, and antibody dependent killing by granulocytes and monocytes. Contributes to natural killer cell cytotoxicity. Involved in leukocyte adhesion and transmigration of leukocytes including T-cells and neutrophils. Acts as a platform at the immunological synapse to translate TCR engagement and density of the ITGAL ligand ICAM1 into graded adhesion. Required for generation of common lymphoid progenitor cells in bone marrow, indicating the role in lymphopoiesis. Integrin ITGAL/ITGB2 in association with ICAM3, contributes to apoptotic neutrophil phagocytosis by macrophages. This Bos taurus (Bovine) protein is Integrin alpha-L.